A 388-amino-acid polypeptide reads, in one-letter code: Cystathionine gamma-synthase (388 aa).

Residue Lys208 is modified to N6-(pyridoxal phosphate)lysine.

Belongs to the trans-sulfuration enzymes family. Homotetramer. Pyridoxal 5'-phosphate is required as a cofactor.

The protein resides in the cytoplasm. It catalyses the reaction O-succinyl-L-homoserine + L-cysteine = L,L-cystathionine + succinate + H(+). Functionally, catalyzes the formation of L-cystathionine from O-succinyl-L-homoserine (OSHS) and L-cysteine, via a gamma-replacement reaction. In the absence of thiol, catalyzes gamma-elimination to form 2-oxobutanoate, succinate and ammonia. This chain is Cystathionine gamma-synthase (metB), found in Mycobacterium leprae (strain TN).